The following is a 688-amino-acid chain: Glycine--tRNA ligase beta subunit (688 aa).

It belongs to the class-II aminoacyl-tRNA synthetase family. In terms of assembly, tetramer of two alpha and two beta subunits.

The protein localises to the cytoplasm. The catalysed reaction is tRNA(Gly) + glycine + ATP = glycyl-tRNA(Gly) + AMP + diphosphate. This is Glycine--tRNA ligase beta subunit from Listeria welshimeri serovar 6b (strain ATCC 35897 / DSM 20650 / CCUG 15529 / CIP 8149 / NCTC 11857 / SLCC 5334 / V8).